A 448-amino-acid polypeptide reads, in one-letter code: Hydroxycinnamoyl-CoA:piscidic acid hydroxycinnamoyltransferase (448 aa).

Residues histidine 153 and aspartate 395 each act as proton acceptor in the active site.

The protein belongs to the plant acyltransferase family. In terms of tissue distribution, highly expressed in root and rhizome. Expressed in senescent leaf and callus tissues. Expressed in detached leaf treated for 18 hours with ethephon, methyl jasmonate, salicylic acid or illuminated for 24 hours with UV light. Not expressed in mature leaf. Expressed at low levels in leaves and flowers.

The catalysed reaction is (2R,3S)-piscidate + (E)-4-coumaroyl-CoA = cimicifugate K + CoA. It carries out the reaction (2R,3S)-piscidate + (E)-caffeoyl-CoA = cimicifugate D + CoA. It catalyses the reaction (2R,3S)-piscidate + (E)-sinapoyl-CoA = cimicifugate J + CoA. The enzyme catalyses (2R,3S)-piscidate + (E)-feruloyl-CoA = cimicifugate E + CoA. Its pathway is phenylpropanoid metabolism. Catalyzes the formation of cimicifugic acids. Uses hydroxycinnamoyl-CoA thioesters as hydroxycinnamoyl donor substrates. Has a strict specificity for piscidic acid as an acceptor substrate as none of the various other acceptors tested including 4-hydroxyphenyllactic acid, malate, spermidine or tetrahydroxyhexanedioic acid are substrates. Donor substrates include 4-coumaroyl-CoA, caffeoyl-CoA, sinapoyl-CoA and feruloyl-CoA. No activity with cinnamoyl-CoA, isoferuloyl-CoA, 3,4-dimethoxycinnamoyl-CoA or 3,4-dihydroxybenzoyl-CoA as donors. In the reverse reaction with fukinolic acid and CoA as substrates, a formation of fukiic acid is evident. Hence, fukiic acid may also serve as an acceptor substrate. Involved in the biosynthesis of cimicifugic and possibly fukinolic acids. This is Hydroxycinnamoyl-CoA:piscidic acid hydroxycinnamoyltransferase from Actaea racemosa (Black cohosh).